The following is a 93-amino-acid chain: Small ribosomal subunit protein bS20 (93 aa).

It belongs to the bacterial ribosomal protein bS20 family.

In terms of biological role, binds directly to 16S ribosomal RNA. The sequence is that of Small ribosomal subunit protein bS20 from Dictyoglomus turgidum (strain DSM 6724 / Z-1310).